The chain runs to 657 residues: 2',3'-cyclic-nucleotide 2'-phosphodiesterase/3'-nucleotidase (657 aa).

Residues 1 to 26 (MMNRRHFIQISATSILALSANRFAMA) form the signal peptide. A divalent metal cation-binding residues include aspartate 41, histidine 43, aspartate 86, asparagine 126, histidine 235, histidine 267, and histidine 269. Substrate is bound by residues tyrosine 450 and 554 to 559 (YRAYGN).

It belongs to the 5'-nucleotidase family. Requires a divalent metal cation as cofactor.

The protein resides in the periplasm. It catalyses the reaction a nucleoside 2',3'-cyclic phosphate + H2O = a nucleoside 3'-phosphate + H(+). It carries out the reaction a ribonucleoside 3'-phosphate + H2O = a ribonucleoside + phosphate. Its function is as follows. This bifunctional enzyme catalyzes two consecutive reactions during ribonucleic acid degradation. Converts a 2',3'-cyclic nucleotide to a 3'-nucleotide and then the 3'-nucleotide to the corresponding nucleoside and phosphate. In Haemophilus influenzae (strain ATCC 51907 / DSM 11121 / KW20 / Rd), this protein is 2',3'-cyclic-nucleotide 2'-phosphodiesterase/3'-nucleotidase (cpdB).